We begin with the raw amino-acid sequence, 346 residues long: MNILIIGPSWVGDMMMSHSLYQQLKIQYPNCNIDVMAPNWCKPLLARMPEVRKAIEMPLGHGAFELGTRYRLGKSLREQYDMAIVLPNSLKSAFIPFFAKIVHRRGWKGESRYILLNDLRANKKDYPMMVQRYVALAFEKDVIPKADDIPVLKPYLTVEPAQQAETLKKFEKQTALLGERPIIGFCPGAEFGPAKRWPHYHYAKLAEMLITQGYAVALFGSAKDEPVGEEIRQALPEELREFCVNLAGKTNLNEAVDLIANCTAVVTNDSGLMHIAAAVNRPLIALYGPTSPQYTPPLSDKATIIRLIEGELIKVRKGDKEGGYHQSLIDITPEMALEKLNELLAK.

This sequence belongs to the glycosyltransferase 9 family.

It catalyses the reaction an L-alpha-D-Hep-(1-&gt;5)-[alpha-Kdo-(2-&gt;4)]-alpha-Kdo-(2-&gt;6)-lipid A + ADP-L-glycero-beta-D-manno-heptose = an L-alpha-D-Hep-(1-&gt;3)-L-alpha-D-Hep-(1-&gt;5)-[alpha-Kdo-(2-&gt;4)]-alpha-Kdo-(2-&gt;6)-lipid A + ADP + H(+). It participates in bacterial outer membrane biogenesis; LOS core biosynthesis. Functionally, glycosyltransferase involved in the biosynthesis of the core oligosaccharide region of lipooligosaccharide (LOS). Catalyzes the addition of a heptose unit to the heptosyl-Kdo2-lipid A module. This chain is Lipooligosaccharide heptosyltransferase 2 (waaF), found in Haemophilus influenzae (strain ATCC 51907 / DSM 11121 / KW20 / Rd).